The primary structure comprises 101 residues: NAD(P)H-quinone oxidoreductase subunit 4L, chloroplastic (101 aa).

Helical transmembrane passes span 2 to 22, 32 to 52, and 61 to 81; these read ILEH…YGLI, MCLE…SDFF, and IFCI…LAIV.

This sequence belongs to the complex I subunit 4L family. In terms of assembly, NDH is composed of at least 16 different subunits, 5 of which are encoded in the nucleus.

The protein localises to the plastid. It is found in the chloroplast thylakoid membrane. It catalyses the reaction a plastoquinone + NADH + (n+1) H(+)(in) = a plastoquinol + NAD(+) + n H(+)(out). The enzyme catalyses a plastoquinone + NADPH + (n+1) H(+)(in) = a plastoquinol + NADP(+) + n H(+)(out). In terms of biological role, NDH shuttles electrons from NAD(P)H:plastoquinone, via FMN and iron-sulfur (Fe-S) centers, to quinones in the photosynthetic chain and possibly in a chloroplast respiratory chain. The immediate electron acceptor for the enzyme in this species is believed to be plastoquinone. Couples the redox reaction to proton translocation, and thus conserves the redox energy in a proton gradient. The polypeptide is NAD(P)H-quinone oxidoreductase subunit 4L, chloroplastic (Draba nemorosa (Woodland whitlowgrass)).